Here is a 793-residue protein sequence, read N- to C-terminus: Putative potassium transporter 8 (793 aa).

At 1-22 (MDLEFGRGMRSPQRDSWKTTLL) the chain is on the cytoplasmic side. A helical membrane pass occupies residues 23–43 (LAYQSLGVVYGDLSISPLYVF). The Extracellular segment spans residues 44-59 (KSTFAEDIQHSETNEE). The helical transmembrane segment at 60–80 (IFGVLSFVFWTLTLIPLIKYV) threads the bilayer. Residues 81-151 (SIVLRADDNG…EKHKKLHTAL (71 aa)) lie on the Cytoplasmic side of the membrane. A helical transmembrane segment spans residues 152–172 (LIMVLIGTCMVIGDGVLTPAI). Residues 173 to 191 (SVFSAVSGLEFSLSKDHRE) are Extracellular-facing. Residues 192-212 (YAVIPITCVILAFLFALQHYG) form a helical membrane-spanning segment. Residues 213–215 (THR) lie on the Cytoplasmic side of the membrane. The chain crosses the membrane as a helical span at residues 216-236 (VGFLFAPIVLAWLICMSALGL). Residues 237–264 (YNIIHWNPHVYQALNPCYMFKFLKKTRK) are Extracellular-facing. The helical transmembrane segment at 265 to 285 (YGWMSLGGILLCMTGSEAMFA) threads the bilayer. At 286 to 292 (DLGHFSY) the chain is on the cytoplasmic side. The helical transmembrane segment at 293–313 (SAIQLAFTSLVYPALILAYMG) threads the bilayer. Residues 314–343 (QAAYLSKHHDFYSNSQVGFYIAVPDKVRWP) lie on the Extracellular side of the membrane. Residues 344–364 (VLVLAILASVVGSQAIISGTF) form a helical membrane-spanning segment. The Cytoplasmic portion of the chain corresponds to 365–391 (SIINQSQSLSCFPRVKVVHTSDKIHGQ). Residues 392–412 (IYIPEINWLLMILCIAVTVGF) form a helical membrane-spanning segment. Topologically, residues 413 to 422 (RDTKHMGNAS) are extracellular. The N-linked (GlcNAc...) asparagine glycan is linked to Asn420. The helical transmembrane segment at 423-443 (GLAVITVMLVTTCLTSLVIML) threads the bilayer. The Cytoplasmic portion of the chain corresponds to 444–448 (CWRRP). The chain crosses the membrane as a helical span at residues 449–469 (PVLALCFLLFFGSVEALYFSA). At 470-473 (SLIK) the chain is on the extracellular side. A helical transmembrane segment spans residues 474 to 494 (FLEGAWLPILLALFLMAVMLV). Residues 495 to 793 (WHYTTIKKYE…LLEVGMVYVL (299 aa)) are Cytoplasmic-facing. A compositionally biased stretch (polar residues) spans 664-675 (DSVQHSSAASVE). Positions 664-698 (DSVQHSSAASVETTTTRRRSGGGDDDGSPGGGGGR) are disordered.

Belongs to the HAK/KUP transporter (TC 2.A.72.3) family.

The protein resides in the membrane. Its function is as follows. High-affinity potassium transporter. The chain is Putative potassium transporter 8 (HAK8) from Oryza sativa subsp. japonica (Rice).